Reading from the N-terminus, the 459-residue chain is Interleukin-7 receptor subunit alpha (459 aa).

The signal sequence occupies residues 1–20 (MTILGTTFGMVFSLLQVVSG). The Extracellular segment spans residues 21-239 (ESGYAQNGDL…EINNSSGEMD (219 aa)). A disulfide bridge connects residues Cys42 and Cys57. Residues Asn49 and Asn65 are each glycosylated (N-linked (GlcNAc...) asparagine). 2 disulfides stabilise this stretch: Cys74–Cys82 and Cys108–Cys118. Residues 131–231 (APFDLSVVYR…PSYYFRTPEI (101 aa)) enclose the Fibronectin type-III domain. Residues Asn151 and Asn182 are each glycosylated (N-linked (GlcNAc...) asparagine). The WSXWS motif signature appears at 217-221 (WSEWS). N-linked (GlcNAc...) asparagine glycosylation is found at Asn232 and Asn233. A helical transmembrane segment spans residues 240–264 (PILLTISILSFFSVALLVILACVLW). The Cytoplasmic segment spans residues 265–459 (KKRIKPIVWP…VTMSSFYQNQ (195 aa)). Residues 272-280 (VWPSLPDHK) carry the Box 1 motif motif. Thr282 bears the Phosphothreonine; by PKC mark.

The protein belongs to the type I cytokine receptor family. Type 4 subfamily. As to quaternary structure, the IL7 receptor is a heterodimer of IL7R and IL2RG. The TSLP receptor is a heterodimer of CRLF2 and IL7R. Interacts with CD53. In terms of processing, N-glycosylated IL-7Ralpha binds IL7 300-fold more tightly than the unglycosylated form. Ubiquitinated by MARCHF8; leading to lysosomal degradation.

The protein localises to the cell membrane. It localises to the secreted. Receptor for interleukin-7. Also acts as a receptor for thymic stromal lymphopoietin (TSLP). In Homo sapiens (Human), this protein is Interleukin-7 receptor subunit alpha (IL7R).